The following is a 164-amino-acid chain: Thiol peroxidase (164 aa).

Residues 16-162 (LQVGDIAKDF…YEAAINAAKI (147 aa)) form the Thioredoxin domain. Cys58 functions as the Cysteine sulfenic acid (-SOH) intermediate in the catalytic mechanism. Cys58 and Cys92 are disulfide-bonded.

The protein belongs to the peroxiredoxin family. Tpx subfamily. As to quaternary structure, homodimer.

It carries out the reaction a hydroperoxide + [thioredoxin]-dithiol = an alcohol + [thioredoxin]-disulfide + H2O. Thiol-specific peroxidase that catalyzes the reduction of hydrogen peroxide and organic hydroperoxides to water and alcohols, respectively. Plays a role in cell protection against oxidative stress by detoxifying peroxides. The sequence is that of Thiol peroxidase from Streptococcus agalactiae serotype III (strain NEM316).